A 186-amino-acid chain; its full sequence is Elongation factor P (186 aa).

The protein belongs to the elongation factor P family.

The protein localises to the cytoplasm. The protein operates within protein biosynthesis; polypeptide chain elongation. Functionally, involved in peptide bond synthesis. Stimulates efficient translation and peptide-bond synthesis on native or reconstituted 70S ribosomes in vitro. Probably functions indirectly by altering the affinity of the ribosome for aminoacyl-tRNA, thus increasing their reactivity as acceptors for peptidyl transferase. The protein is Elongation factor P of Crocosphaera subtropica (strain ATCC 51142 / BH68) (Cyanothece sp. (strain ATCC 51142)).